Consider the following 1431-residue polypeptide: DNA-directed RNA polymerase subunit beta' (1431 aa).

C66, C68, C81, and C84 together coordinate Zn(2+). Mg(2+)-binding residues include D470, D472, and D474. The Zn(2+) site is built by C813, C887, C894, and C897.

It belongs to the RNA polymerase beta' chain family. In terms of assembly, the RNAP catalytic core consists of 2 alpha, 1 beta, 1 beta' and 1 omega subunit. When a sigma factor is associated with the core the holoenzyme is formed, which can initiate transcription. The cofactor is Mg(2+). It depends on Zn(2+) as a cofactor.

It carries out the reaction RNA(n) + a ribonucleoside 5'-triphosphate = RNA(n+1) + diphosphate. DNA-dependent RNA polymerase catalyzes the transcription of DNA into RNA using the four ribonucleoside triphosphates as substrates. In Parabacteroides distasonis (strain ATCC 8503 / DSM 20701 / CIP 104284 / JCM 5825 / NCTC 11152), this protein is DNA-directed RNA polymerase subunit beta'.